A 178-amino-acid polypeptide reads, in one-letter code: Acireductone dioxygenase (178 aa).

Fe(2+) is bound by residues His100, His102, Glu106, and His145. The Ni(2+) site is built by His100, His102, Glu106, and His145.

It belongs to the acireductone dioxygenase (ARD) family. Monomer. Fe(2+) is required as a cofactor. It depends on Ni(2+) as a cofactor.

The catalysed reaction is 1,2-dihydroxy-5-(methylsulfanyl)pent-1-en-3-one + O2 = 3-(methylsulfanyl)propanoate + CO + formate + 2 H(+). It carries out the reaction 1,2-dihydroxy-5-(methylsulfanyl)pent-1-en-3-one + O2 = 4-methylsulfanyl-2-oxobutanoate + formate + 2 H(+). It functions in the pathway amino-acid biosynthesis; L-methionine biosynthesis via salvage pathway; L-methionine from S-methyl-5-thio-alpha-D-ribose 1-phosphate: step 5/6. Catalyzes 2 different reactions between oxygen and the acireductone 1,2-dihydroxy-3-keto-5-methylthiopentene (DHK-MTPene) depending upon the metal bound in the active site. Fe-containing acireductone dioxygenase (Fe-ARD) produces formate and 2-keto-4-methylthiobutyrate (KMTB), the alpha-ketoacid precursor of methionine in the methionine recycle pathway. Ni-containing acireductone dioxygenase (Ni-ARD) produces methylthiopropionate, carbon monoxide and formate, and does not lie on the methionine recycle pathway. This chain is Acireductone dioxygenase (mtnD), found in Bacillus subtilis (strain 168).